Here is a 271-residue protein sequence, read N- to C-terminus: 4-diphosphocytidyl-2-C-methyl-D-erythritol kinase (271 aa).

K8 is an active-site residue. P90–A100 serves as a coordination point for ATP. The active site involves D132.

It belongs to the GHMP kinase family. IspE subfamily.

It carries out the reaction 4-CDP-2-C-methyl-D-erythritol + ATP = 4-CDP-2-C-methyl-D-erythritol 2-phosphate + ADP + H(+). It participates in isoprenoid biosynthesis; isopentenyl diphosphate biosynthesis via DXP pathway; isopentenyl diphosphate from 1-deoxy-D-xylulose 5-phosphate: step 3/6. In terms of biological role, catalyzes the phosphorylation of the position 2 hydroxy group of 4-diphosphocytidyl-2C-methyl-D-erythritol. The protein is 4-diphosphocytidyl-2-C-methyl-D-erythritol kinase of Parabacteroides distasonis (strain ATCC 8503 / DSM 20701 / CIP 104284 / JCM 5825 / NCTC 11152).